A 1150-amino-acid polypeptide reads, in one-letter code: MSLVQGHGTSGLFTEPPNPINQQESSGPSLPAQDAAQAFASSPRAGATSTIVNPPKRKYKGAVVVQRATLSISAVLDNGQCVEIKYHSNLASALTNLCNTNLYDLPACLNRPITAHNLPALIEEAAAPYSLICYYQRGTVRRVEFQAEVPLLSFPLKFLVKQGKVFLIKDISQMQKCEFCGSFFKVTHTCALRRRDFYFHHVAAHSADWWEKISFTPIGAPPNTERLFIVYDVETYTWHGKFGKQLVPFMLVFQLLGDDHLVNVAKTLATEQNWEIWNGKEQDTLYYCITPEKRAIGVKFKKFRDTLQQHIAASLWSHVICQNPQLQEKATTLGLESPEELTPDQLKKFKLKGNPRFIEVYAVGHNITGFDEILLAAQVVSTRAEIPPVFEICRNFMPRAGRLLFNDITYSLPNPSYVPAKSYEHWEQGQVLASDLKSQYIKFMVRDTFSLTHTSLKNAAKAYSLTVSKGCCPYQAVNEFYMLGSYQQDADGFPDLKYWKDQEEYSFNKDLWIKEKKGAYDIIQQTLDYCALDVQVTAQLVNKLIESYQIFIKNSVNLPETSFNVFQRPTISSNSHAIFKQILYKAEKPNTHHLSTILMAPSNEMYEYVRLSIRGGRCYPTYIGVLQEPVFVYDICGMYASALTHPFPAGSPLNPYERALAIKAYEQKMLNHKTISYFDKDLLPGIFTIDADPPAEEFLDVLPPFCSRKGGRLCWTNEPLRGEIATSIDVITLHNRGWKVTLIPDTRTTVFPEWKCLAREYVQLNISAKEEADKSKNQTMRSIAKLLSNALYGSFATKLDNKKTVFSDQIESNIAKEIASGAYVVKSSSYIETDNLCAEIMPEFVVAYPPVNSDVRQLAPPSCSEEDPTKDPLAEAPFMHNFSMTSYHYKPIMFIDAEDDDFCLHTLEKSTPLIANNRYPSQIASFVLAWTRAFVSEWSQFLYENDAGTPLENRVLKSVYGDTDSLFTTMEGYKLMEEKGKKRLKKNGGKLVFDPSNPELTWLVECETQCEKCGSDAYSSESVYLAPKLYALKDTTCPKCHHVGKGKLRAKGHATSTLSYDVLKACYYADMQQGSDVFKTSRMSLRRTLTSVQAHVQPFTVTETTLTRKLRPWKDKTLHALDMHRLIPYSRKHPNPRNTETTWMELQWMT.

Residues 1–53 are disordered; it reads MSLVQGHGTSGLFTEPPNPINQQESSGPSLPAQDAAQAFASSPRAGATSTIVN.

The protein belongs to the DNA polymerase type-B family. Heterodimer with the terminal protein; this heterodimer binds to bp 9 to 18 of the genome. Forms a complex with viral pTP, DBP and hosts NFIA and POU2F1/OCT1 for initiation of replication.

Its subcellular location is the host nucleus. The catalysed reaction is DNA(n) + a 2'-deoxyribonucleoside 5'-triphosphate = DNA(n+1) + diphosphate. In terms of biological role, eukaryotic-type DNA polymerase involved in viral genomic replication. DNA synthesis is protein primed, and acts in a strand displacement replication. Assembles in complex with viral pTP, DBP, host NFIA and host POU2F1/OCT1 on viral origin of replication. The polymerase covalently transfers dCMP onto pTP, thereby initiating complementary strand synthesis. The protein is DNA polymerase of Canis lupus familiaris (Dog).